The primary structure comprises 148 residues: SsrA-binding protein (148 aa).

It belongs to the SmpB family.

Its subcellular location is the cytoplasm. Functionally, required for rescue of stalled ribosomes mediated by trans-translation. Binds to transfer-messenger RNA (tmRNA), required for stable association of tmRNA with ribosomes. tmRNA and SmpB together mimic tRNA shape, replacing the anticodon stem-loop with SmpB. tmRNA is encoded by the ssrA gene; the 2 termini fold to resemble tRNA(Ala) and it encodes a 'tag peptide', a short internal open reading frame. During trans-translation Ala-aminoacylated tmRNA acts like a tRNA, entering the A-site of stalled ribosomes, displacing the stalled mRNA. The ribosome then switches to translate the ORF on the tmRNA; the nascent peptide is terminated with the 'tag peptide' encoded by the tmRNA and targeted for degradation. The ribosome is freed to recommence translation, which seems to be the essential function of trans-translation. The protein is SsrA-binding protein of Ehrlichia ruminantium (strain Welgevonden).